A 541-amino-acid chain; its full sequence is Putative acyl-CoA dehydrogenase AidB (541 aa).

FAD contacts are provided by residues 182-191 (MGMTEKQGGS), threonine 185, serine 191, 216-218 (FFS), serine 218, 423-433 (IWEGSGNIMCL), and asparagine 429. The interval 445–541 (VYDLLSEAFV…LLRATGGVCV (97 aa)) is dsDNA-binding.

Belongs to the acyl-CoA dehydrogenase family. Homotetramer. Dimer of dimers. FAD is required as a cofactor.

Its subcellular location is the cytoplasm. Part of the adaptive DNA-repair response to alkylating agents. Could prevent alkylation damage by protecting DNA and destroying alkylating agents that have yet to reach their DNA target. Binds to double-stranded DNA with a preference for a DNA region that includes its own promoter. Shows weak isovaleryl-CoA dehydrogenase activity in vitro. This is Putative acyl-CoA dehydrogenase AidB (aidB) from Escherichia coli (strain K12).